We begin with the raw amino-acid sequence, 475 residues long: ATP synthase subunit beta (475 aa).

152 to 159 (GGAGVGKT) is an ATP binding site.

Belongs to the ATPase alpha/beta chains family. As to quaternary structure, F-type ATPases have 2 components, CF(1) - the catalytic core - and CF(0) - the membrane proton channel. CF(1) has five subunits: alpha(3), beta(3), gamma(1), delta(1), epsilon(1). CF(0) has three main subunits: a(1), b(2) and c(9-12). The alpha and beta chains form an alternating ring which encloses part of the gamma chain. CF(1) is attached to CF(0) by a central stalk formed by the gamma and epsilon chains, while a peripheral stalk is formed by the delta and b chains.

Its subcellular location is the cell membrane. It catalyses the reaction ATP + H2O + 4 H(+)(in) = ADP + phosphate + 5 H(+)(out). Functionally, produces ATP from ADP in the presence of a proton gradient across the membrane. The catalytic sites are hosted primarily by the beta subunits. The sequence is that of ATP synthase subunit beta from Wolbachia pipientis wMel.